We begin with the raw amino-acid sequence, 159 residues long: Cytochrome c-type biogenesis protein CcmE (159 aa).

Residues 1-8 (MHPIRKKR) are Cytoplasmic-facing. The helical; Signal-anchor for type II membrane protein transmembrane segment at 9–29 (LTIVLFLVAGIAIAVGLTTYA) threads the bilayer. Residues 30 to 159 (LRQNINLFYD…VEKAAETTAY (130 aa)) lie on the Periplasmic side of the membrane. 2 residues coordinate heme: H124 and Y128. Positions 135–159 (EALERSSKGQHKSADVEKAAETTAY) are disordered. Basic and acidic residues predominate over residues 136–159 (ALERSSKGQHKSADVEKAAETTAY).

The protein belongs to the CcmE/CycJ family.

It is found in the cell inner membrane. Its function is as follows. Heme chaperone required for the biogenesis of c-type cytochromes. Transiently binds heme delivered by CcmC and transfers the heme to apo-cytochromes in a process facilitated by CcmF and CcmH. The polypeptide is Cytochrome c-type biogenesis protein CcmE (Marinobacter nauticus (strain ATCC 700491 / DSM 11845 / VT8) (Marinobacter aquaeolei)).